Reading from the N-terminus, the 81-residue chain is Large ribosomal subunit protein bL31B (81 aa).

The protein belongs to the bacterial ribosomal protein bL31 family. Type B subfamily. As to quaternary structure, part of the 50S ribosomal subunit.

This Lactococcus lactis subsp. lactis (strain IL1403) (Streptococcus lactis) protein is Large ribosomal subunit protein bL31B.